A 430-amino-acid polypeptide reads, in one-letter code: Dihydrolipoyllysine-residue acetyltransferase component of pyruvate dehydrogenase complex (430 aa).

Residues 2–77 (AFEFRLPDIG…VVGDVIVKID (76 aa)) form the Lipoyl-binding domain. Lys43 bears the N6-lipoyllysine mark. Residues 80–122 (DAEDMQFKGHDDDSSSKEEPAKEEAPAEQAPVATQTEEVDENR) form a disordered region. The segment covering 84–104 (MQFKGHDDDSSSKEEPAKEEA) has biased composition (basic and acidic residues). Residues 125–162 (KAMPSVRKYAREKGVNIKAVSGSGKNGRITKEDVDAYL) form the Peripheral subunit-binding (PSBD) domain. A disordered region spans residues 164–199 (GGAPTASNESAASATSEEVAETPAAPAAVSLEGDFP). The span at 166-193 (APTASNESAASATSEEVAETPAAPAAVS) shows a compositional bias: low complexity. The active site involves His401.

Belongs to the 2-oxoacid dehydrogenase family. As to quaternary structure, forms a 24-polypeptide structural core with octahedral symmetry. It depends on (R)-lipoate as a cofactor.

The enzyme catalyses N(6)-[(R)-dihydrolipoyl]-L-lysyl-[protein] + acetyl-CoA = N(6)-[(R)-S(8)-acetyldihydrolipoyl]-L-lysyl-[protein] + CoA. Its function is as follows. The pyruvate dehydrogenase complex catalyzes the overall conversion of pyruvate to acetyl-CoA and CO(2). It contains multiple copies of three enzymatic components: pyruvate dehydrogenase (E1), dihydrolipoamide acetyltransferase (E2) and lipoamide dehydrogenase (E3). The sequence is that of Dihydrolipoyllysine-residue acetyltransferase component of pyruvate dehydrogenase complex (pdhC) from Staphylococcus aureus (strain Mu50 / ATCC 700699).